Consider the following 432-residue polypeptide: MSTHTKRPTSESLYEVAQKCIVGGVNSPSRSYKAVGGGAPVYMERGEGAYFYDVDGNRYIDYLAAYGPIITGHGHPHITEAITNASRNGLLYGTPHRLEIDFAHKLQQAIPSLEKVRFTNSGTEAVMTTIRVARAYTGRELVVKFSGCYHGHSDLMLIAAGSGPATLGSPDSAGVTKATAKEVITTPFNDIESYRQIMAEWGDQVACVLVEPIVGNFGIVEPQPGFLEAINEITHEHGALVIYDEVITAFRFTYGSAQELLNIRPDMTALGKIIGGGLPIGAYGGRQDIMEHVAPLGPAYQAGTMAGNPASMAAGIACLELLEQPGVYEEFDRLGAKLEQGILEAADTHGVTITINRLKGALTVYFTDETVVDYLGAERADSEMFGRFFKLMLEQGVNLAPSKYEAWFLTTAHTETDIDETIAAVNRAFAQL.

Lysine 272 is subject to N6-(pyridoxal phosphate)lysine.

This sequence belongs to the class-III pyridoxal-phosphate-dependent aminotransferase family. HemL subfamily. As to quaternary structure, homodimer. Pyridoxal 5'-phosphate serves as cofactor.

The protein resides in the cytoplasm. It carries out the reaction (S)-4-amino-5-oxopentanoate = 5-aminolevulinate. It functions in the pathway porphyrin-containing compound metabolism; protoporphyrin-IX biosynthesis; 5-aminolevulinate from L-glutamyl-tRNA(Glu): step 2/2. This Exiguobacterium sibiricum (strain DSM 17290 / CCUG 55495 / CIP 109462 / JCM 13490 / 255-15) protein is Glutamate-1-semialdehyde 2,1-aminomutase 1.